Here is an 894-residue protein sequence, read N- to C-terminus: Tyrosine-protein kinase receptor UFO (894 aa).

The N-terminal stretch at 1–25 (MAWRCPRMGRVPLAWCLALCGWACM) is a signal peptide. Positions 26–92 (APRGTQAEES…QTQVPLGEDE (67 aa)) are interaction with GAS6. Residues 26–451 (APRGTQAEES…STPAFSWPWW (426 aa)) lie on the Extracellular side of the membrane. 2 Ig-like C2-type domains span residues 27 to 128 (PRGT…TFVS) and 139 to 222 (PYFL…ATIT). A glycan (N-linked (GlcNAc...) asparagine) is linked at N43. C56 and C117 form a disulfide bridge. N-linked (GlcNAc...) asparagine glycans are attached at residues N157 and N198. The cysteines at positions 160 and 205 are disulfide-linked. 2 consecutive Fibronectin type-III domains span residues 227–331 (QPRN…TPEG) and 336–428 (PPEN…AWRP). Residues N339, N345, and N401 are each glycosylated (N-linked (GlcNAc...) asparagine). Residues 452-472 (YVLLGAVVAAACVLILALFLV) traverse the membrane as a helical segment. Residues 473-894 (HRRKKETRYG…PAAPGQEDGA (422 aa)) lie on the Cytoplasmic side of the membrane. One can recognise a Protein kinase domain in the interval 536–807 (VALGKTLGEG…ELREDLENTL (272 aa)). Residues 542-550 (LGEGEFGAV) and K567 contribute to the ATP site. The Proton acceptor role is filled by D672. Y703, Y779, and Y821 each carry phosphotyrosine; by autocatalysis. Disordered regions lie at residues 823-853 (NMDE…DSCS) and 866-894 (YVLC…EDGA). Residue Y866 is modified to Phosphotyrosine; by autocatalysis. S884 carries the post-translational modification Phosphoserine.

The protein belongs to the protein kinase superfamily. Tyr protein kinase family. AXL/UFO subfamily. Heterodimer and heterotetramer with ligand GAS6. Interacts with CBL, GRB2, LCK, NCK2, PIK3R1, PIK3R2, PIK3R3, PLCG1, SOCS1 and TNS2. Part of a complex including AXL, TNK2 and GRB2, in which GRB2 promotes AXL recruitment by TNK2. Monoubiquitinated upon GAS6-binding. A very small proportion of the receptor could be subjected to polyubiquitination in a very transient fashion. In terms of processing, phosphorylated at tyrosine residues by autocatalysis, which activates kinase activity. In terms of tissue distribution, highly expressed in metastatic colon tumors. Expressed in primary colon tumors. Weakly expressed in normal colon tissue.

The protein resides in the cell membrane. The catalysed reaction is L-tyrosyl-[protein] + ATP = O-phospho-L-tyrosyl-[protein] + ADP + H(+). With respect to regulation, activated by GAS6-binding and subsequent autophosphorylation. Its function is as follows. Receptor tyrosine kinase that transduces signals from the extracellular matrix into the cytoplasm by binding growth factor GAS6 and which is thus regulating many physiological processes including cell survival, cell proliferation, migration and differentiation. Ligand binding at the cell surface induces dimerization and autophosphorylation of AXL. Following activation by ligand, AXL binds and induces tyrosine phosphorylation of PI3-kinase subunits PIK3R1, PIK3R2 and PIK3R3; but also GRB2, PLCG1, LCK and PTPN11. Other downstream substrate candidates for AXL are CBL, NCK2, SOCS1 and TNS2. Recruitment of GRB2 and phosphatidylinositol 3 kinase regulatory subunits by AXL leads to the downstream activation of the AKT kinase. GAS6/AXL signaling plays a role in various processes such as endothelial cell survival during acidification by preventing apoptosis, optimal cytokine signaling during human natural killer cell development, hepatic regeneration, gonadotropin-releasing hormone neuron survival and migration, platelet activation, or regulation of thrombotic responses. Also plays an important role in inhibition of Toll-like receptors (TLRs)-mediated innate immune response. Functionally, (Microbial infection) Acts as a receptor for lassa virus and lymphocytic choriomeningitis virus, possibly through GAS6 binding to phosphatidyl-serine at the surface of virion envelope. (Microbial infection) Acts as a receptor for Ebolavirus, possibly through GAS6 binding to phosphatidyl-serine at the surface of virion envelope. In terms of biological role, (Microbial infection) Promotes Zika virus entry in glial cells, Sertoli cells and astrocytes. Additionally, Zika virus potentiates AXL kinase activity to antagonize type I interferon signaling and thereby promotes infection. Interferon signaling inhibition occurs via an SOCS1-dependent mechanism. This is Tyrosine-protein kinase receptor UFO (AXL) from Homo sapiens (Human).